The chain runs to 241 residues: Leucyl/phenylalanyl-tRNA--protein transferase (241 aa).

The protein belongs to the L/F-transferase family.

It localises to the cytoplasm. It carries out the reaction N-terminal L-lysyl-[protein] + L-leucyl-tRNA(Leu) = N-terminal L-leucyl-L-lysyl-[protein] + tRNA(Leu) + H(+). It catalyses the reaction N-terminal L-arginyl-[protein] + L-leucyl-tRNA(Leu) = N-terminal L-leucyl-L-arginyl-[protein] + tRNA(Leu) + H(+). The enzyme catalyses L-phenylalanyl-tRNA(Phe) + an N-terminal L-alpha-aminoacyl-[protein] = an N-terminal L-phenylalanyl-L-alpha-aminoacyl-[protein] + tRNA(Phe). In terms of biological role, functions in the N-end rule pathway of protein degradation where it conjugates Leu, Phe and, less efficiently, Met from aminoacyl-tRNAs to the N-termini of proteins containing an N-terminal arginine or lysine. This chain is Leucyl/phenylalanyl-tRNA--protein transferase, found in Neisseria meningitidis serogroup C / serotype 2a (strain ATCC 700532 / DSM 15464 / FAM18).